We begin with the raw amino-acid sequence, 619 residues long: DNA mismatch repair protein MutL (619 aa).

The span at 368-378 shows a compositional bias: basic and acidic residues; that stretch reads VDEPKQVDEPK. The interval 368-403 is disordered; the sequence is VDEPKQVDEPKQSSPVQEPKEEIPSFLPTVESKQND.

It belongs to the DNA mismatch repair MutL/HexB family.

Its function is as follows. This protein is involved in the repair of mismatches in DNA. It is required for dam-dependent methyl-directed DNA mismatch repair. May act as a 'molecular matchmaker', a protein that promotes the formation of a stable complex between two or more DNA-binding proteins in an ATP-dependent manner without itself being part of a final effector complex. This is DNA mismatch repair protein MutL from Geobacillus sp. (strain WCH70).